The sequence spans 438 residues: Putative hydrolase MSMEG_3995/MSMEI_3903 (438 aa).

4 residues coordinate Zn(2+): D95, D104, E143, and H208. An Isoglutamyl lysine isopeptide (Lys-Gln) (interchain with Q-Cter in protein Pup) cross-link involves residue K217. Residue H400 participates in Zn(2+) binding.

It belongs to the peptidase M20 family. Requires Zn(2+) as cofactor.

The sequence is that of Putative hydrolase MSMEG_3995/MSMEI_3903 from Mycolicibacterium smegmatis (strain ATCC 700084 / mc(2)155) (Mycobacterium smegmatis).